Reading from the N-terminus, the 320-residue chain is NAD kinase (320 aa).

Aspartate 96 functions as the Proton acceptor in the catalytic mechanism. NAD(+)-binding positions include 96-97, arginine 101, 170-171, aspartate 200, and 211-216; these read DG, NE, and TAYAFS.

It belongs to the NAD kinase family. Requires a divalent metal cation as cofactor.

It is found in the cytoplasm. The catalysed reaction is NAD(+) + ATP = ADP + NADP(+) + H(+). In terms of biological role, involved in the regulation of the intracellular balance of NAD and NADP, and is a key enzyme in the biosynthesis of NADP. Catalyzes specifically the phosphorylation on 2'-hydroxyl of the adenosine moiety of NAD to yield NADP. This Rhodococcus opacus (strain B4) protein is NAD kinase.